The sequence spans 302 residues: Sulfotransferase 1C4 (302 aa).

Residue 55-60 (KAGTTW) coordinates 3'-phosphoadenylyl sulfate. 113–115 (KTH) contacts substrate. H115 serves as the catalytic Proton acceptor. 3'-phosphoadenylyl sulfate contacts are provided by residues R137, S145, Y200, 234 to 239 (TSFDVM), and 262 to 266 (FMRKG).

It belongs to the sulfotransferase 1 family. Expressed in liver, kidney and jejunum.

The protein resides in the cytoplasm. It localises to the cytosol. The enzyme catalyses a phenol + 3'-phosphoadenylyl sulfate = an aryl sulfate + adenosine 3',5'-bisphosphate + H(+). It catalyses the reaction 17beta-estradiol + 3'-phosphoadenylyl sulfate = 17beta-estradiol 3-sulfate + adenosine 3',5'-bisphosphate + H(+). The catalysed reaction is bisphenol A + 3'-phosphoadenylyl sulfate = bisphenyl A sulfate + adenosine 3',5'-bisphosphate + H(+). Functionally, sulfotransferase that utilizes 3'-phospho-5'-adenylyl sulfate (PAPS) as sulfonate donor to catalyze the sulfate conjugation of phenolic compounds and estrogen (E2). Can also sulfonate estrogenic compounds, however, the dietary flavonoids (phytoestrogen) and environmental estrogens, like bisphenol A are better substrates than 17beta-estradiol (E2). The chain is Sulfotransferase 1C4 (SULT1C4) from Macaca fascicularis (Crab-eating macaque).